A 329-amino-acid chain; its full sequence is COP9 signalosome complex subunit 6 (329 aa).

The MPN domain maps to 44–175 (TRVKAQAACS…VTIYESELHV (132 aa)).

Belongs to the peptidase M67A family. CSN6 subfamily. As to quaternary structure, component of the CSN complex, probably composed of CSN1, CSN2, CSN3, CSN4, CSN5, CSN6, CSN7 and CSN8.

Functionally, component of the COP9 signalosome complex (CSN), a complex involved in various cellular and developmental processes such as photomorphogenesis and response to hormones. The CSN complex is an essential regulator of the ubiquitin (Ubl) conjugation pathway by mediating the deneddylation of the cullin subunits of SCF-type E3 ligase complexes, leading to decrease the Ubl ligase activity of SCF. Involved in early response to iron deficiency. The polypeptide is COP9 signalosome complex subunit 6 (Oryza sativa subsp. japonica (Rice)).